The primary structure comprises 443 residues: Amino-acid acetyltransferase (443 aa).

The N-acetyltransferase domain maps to 296–435 (EQIRRATIND…KEMYNYQRRS (140 aa)).

This sequence belongs to the acetyltransferase family. ArgA subfamily. In terms of assembly, homohexamer.

The protein localises to the cytoplasm. The enzyme catalyses L-glutamate + acetyl-CoA = N-acetyl-L-glutamate + CoA + H(+). The protein operates within amino-acid biosynthesis; L-arginine biosynthesis; N(2)-acetyl-L-ornithine from L-glutamate: step 1/4. The sequence is that of Amino-acid acetyltransferase from Enterobacter sp. (strain 638).